We begin with the raw amino-acid sequence, 338 residues long: Anthranilate phosphoribosyltransferase (338 aa).

Residues G80, 83–84 (GD), T88, 90–93 (NIST), 108–116 (KHGNRAMSS), and S120 contribute to the 5-phospho-alpha-D-ribose 1-diphosphate site. G80 provides a ligand contact to anthranilate. S92 is a Mg(2+) binding site. Residue N111 coordinates anthranilate. R166 provides a ligand contact to anthranilate. Positions 225 and 226 each coordinate Mg(2+).

The protein belongs to the anthranilate phosphoribosyltransferase family. Homodimer. The cofactor is Mg(2+).

It carries out the reaction N-(5-phospho-beta-D-ribosyl)anthranilate + diphosphate = 5-phospho-alpha-D-ribose 1-diphosphate + anthranilate. The protein operates within amino-acid biosynthesis; L-tryptophan biosynthesis; L-tryptophan from chorismate: step 2/5. In terms of biological role, catalyzes the transfer of the phosphoribosyl group of 5-phosphorylribose-1-pyrophosphate (PRPP) to anthranilate to yield N-(5'-phosphoribosyl)-anthranilate (PRA). This is Anthranilate phosphoribosyltransferase from Herpetosiphon aurantiacus (strain ATCC 23779 / DSM 785 / 114-95).